The sequence spans 762 residues: MAILGELGTEILIPVCGVIGIVFAVAQWFIVSKVKVTPGAASAAAGAKNGYGDYLIEEEEGLNDHNVVVKCAEIQTAISEGATSFLFTMYQYVGMFMVVFAAIIFLFLGSIEGFSTKGQPCTYSKGTCKPALYTALFSTASFLLGAITSLVSGFLGMKIATYANARTTLEARKGVGKAFITAFRSGAVMGFLLSSSGLVVLYITINVFKMYYGDDWEGLFESITGYGLGGSSMALFGRVGGGIYTKAADVGADLVGKVERNIPEDDPRNPAVIADNVGDNVGDIAGMGSDLFGSYAESSCAALVVASISSFGINHDFTAMCYPLLVSSVGIIVCLLTTLFATDFFEIKAANEIEPALKKQLIISTALMTVGVAVISWLALPAKFTIFNFGAQKEVSNWGLFFCVAVGLWAGLIIGFVTEYYTSNAYSPVQDVADSCRTGAATNVIFGLALGYKSVIIPIFAIAVSIYVSFSIAAMYGIAMAALGMLSTMATGLAIDAYGPISDNAGGIAEMAGMSHRIRERTDALDAAGNTTAAIGKGFAIGSAALVSLALFGAFVSRAGVKVVDVLSPKVFIGLIVGAMLPYWFSAMTMKSVGSAALKMVEEVRRQFNTIPGLMEGTAKPDYATCVKISTDASIKEMIPPGALVMLTPLIVGTLFGVETLSGVLAGALVSGVQIAISASNTGGAWDNAKKYIEAGNSEHARSLGPKGSDCHKAAVIGDTIGDPLKDTSGPSLNILIKLMAVESLVFAPFFATYGGLLFKYI.

The Intravacuolar portion of the chain corresponds to 1–6; it reads MAILGE. Residues 7-33 traverse the membrane as a helical segment; that stretch reads LGTEILIPVCGVIGIVFAVAQWFIVSK. At 34–81 the chain is on the cytoplasmic side; sequence VKVTPGAASAAAGAKNGYGDYLIEEEEGLNDHNVVVKCAEIQTAISEG. The chain crosses the membrane as a helical span at residues 82 to 111; the sequence is ATSFLFTMYQYVGMFMVVFAAIIFLFLGSI. The Intravacuolar segment spans residues 112–131; sequence EGFSTKGQPCTYSKGTCKPA. C121 and C128 form a disulfide bridge. Residues 132–159 form a helical membrane-spanning segment; the sequence is LYTALFSTASFLLGAITSLVSGFLGMKI. Over 160–182 the chain is Cytoplasmic; the sequence is ATYANARTTLEARKGVGKAFITA. A helical transmembrane segment spans residues 183–212; the sequence is FRSGAVMGFLLSSSGLVVLYITINVFKMYY. Residues 213-215 are Intravacuolar-facing; sequence GDD. A helical membrane pass occupies residues 216 to 244; that stretch reads WEGLFESITGYGLGGSSMALFGRVGGGIY. Topologically, residues 245–282 are cytoplasmic; sequence TKAADVGADLVGKVERNIPEDDPRNPAVIADNVGDNVG. K246 provides a ligand contact to substrate. D249, D253, and D279 together coordinate Mg(2+). A helical transmembrane segment spans residues 283–308; the sequence is DIAGMGSDLFGSYAESSCAALVVASI. Residues 309–316 lie on the Intravacuolar side of the membrane; sequence SSFGINHD. Residues 317–342 traverse the membrane as a helical segment; that stretch reads FTAMCYPLLVSSVGIIVCLLTTLFAT. At 343–350 the chain is on the cytoplasmic side; the sequence is DFFEIKAA. Residues 351–378 traverse the membrane as a helical segment; the sequence is NEIEPALKKQLIISTALMTVGVAVISWL. Residues 379 to 397 are Intravacuolar-facing; that stretch reads ALPAKFTIFNFGAQKEVSN. The helical transmembrane segment at 398–421 threads the bilayer; sequence WGLFFCVAVGLWAGLIIGFVTEYY. Topologically, residues 422–443 are cytoplasmic; that stretch reads TSNAYSPVQDVADSCRTGAATN. The helical transmembrane segment at 444 to 468 threads the bilayer; the sequence is VIFGLALGYKSVIIPIFAIAVSIYV. The Intravacuolar segment spans residues 469–474; it reads SFSIAA. Residues 475–501 traverse the membrane as a helical segment; the sequence is MYGIAMAALGMLSTMATGLAIDAYGPI. Over 502–530 the chain is Cytoplasmic; the sequence is SDNAGGIAEMAGMSHRIRERTDALDAAGN. The Mg(2+) site is built by D503 and N530. Residues 531–559 form a helical membrane-spanning segment; sequence TTAAIGKGFAIGSAALVSLALFGAFVSRA. Over 560 to 569 the chain is Intravacuolar; that stretch reads GVKVVDVLSP. Residues 570 to 598 form a helical membrane-spanning segment; the sequence is KVFIGLIVGAMLPYWFSAMTMKSVGSAAL. Residues 599 to 627 lie on the Cytoplasmic side of the membrane; the sequence is KMVEEVRRQFNTIPGLMEGTAKPDYATCV. Residues 628–656 traverse the membrane as a helical segment; sequence KISTDASIKEMIPPGALVMLTPLIVGTLF. G657 is a topological domain (intravacuolar). The helical transmembrane segment at 658-685 threads the bilayer; it reads VETLSGVLAGALVSGVQIAISASNTGGA. Topologically, residues 686 to 728 are cytoplasmic; the sequence is WDNAKKYIEAGNSEHARSLGPKGSDCHKAAVIGDTIGDPLKDT. D687 and D723 together coordinate Mg(2+). A substrate-binding site is contributed by K726. The helical transmembrane segment at 729–754 threads the bilayer; that stretch reads SGPSLNILIKLMAVESLVFAPFFATY. Over 755-762 the chain is Intravacuolar; the sequence is GGLLFKYI.

This sequence belongs to the H(+)-translocating pyrophosphatase (TC 3.A.10) family. K(+)-stimulated subfamily. Monomer.

Its subcellular location is the vacuole membrane. The enzyme catalyses diphosphate + H2O + H(+)(in) = 2 phosphate + 2 H(+)(out). In terms of biological role, contributes to the transtonoplast (from cytosol to vacuole lumen) H(+)-electrochemical potential difference. It establishes a proton gradient of similar and often greater magnitude than the H(+)-ATPase on the same membrane. This Hordeum vulgare (Barley) protein is Pyrophosphate-energized vacuolar membrane proton pump.